The sequence spans 151 residues: FAD synthase (151 aa).

ATP contacts are provided by residues 21–22 (TF), 26–29 (HPGH), and D104.

This sequence belongs to the archaeal FAD synthase family. In terms of assembly, homodimer. A divalent metal cation is required as a cofactor.

The enzyme catalyses FMN + ATP + H(+) = FAD + diphosphate. The protein operates within cofactor biosynthesis; FAD biosynthesis; FAD from FMN: step 1/1. Catalyzes the transfer of the AMP portion of ATP to flavin mononucleotide (FMN) to produce flavin adenine dinucleotide (FAD) coenzyme. This is FAD synthase from Methanosarcina acetivorans (strain ATCC 35395 / DSM 2834 / JCM 12185 / C2A).